Here is a 1452-residue protein sequence, read N- to C-terminus: CLIP-associating protein 1 (1452 aa).

HEAT repeat units follow at residues 68 to 87 (LLGM…RFRS), 88 to 124 (QIGT…QASN), and 163 to 200 (LTLS…HVGE). A disordered region spans residues 239 to 299 (KNFDDEDSVD…GTAKEGAGGV (61 aa)). A compositionally biased stretch (low complexity) spans 253-267 (SSASSSASSKAPQAA). 2 HEAT repeats span residues 407–442 (HGAE…IRQT) and 443–479 (HVPR…EWQT). Disordered stretches follow at residues 545 to 735 (SDSI…GISQ) and 771 to 792 (YGMY…ERSY). Over residues 550–569 (SLPQSDRSSSSSQESLNRPL) the composition is skewed to low complexity. A compositionally biased stretch (polar residues) spans 573–597 (RSPTGSTVSRASTATSKSTPGSLQR). 3 stretches are compositionally biased toward low complexity: residues 606–621 (AATC…ASAA), 645–659 (QSSG…TPAD), and 668–682 (VVSQ…SSPG). A compositionally biased stretch (polar residues) spans 715–724 (QGCSRETSPS). The segment covering 781–792 (SDASSACSERSY) has biased composition (low complexity). The stretch at 926–963 (QQFNILMRFIVDQTQTPNLKVKVAILKYIESLARQMDP) is one HEAT 6 repeat. The interval 1033–1076 (LKNSSNSSMGSPSNTIGRTPSRHSSSRASPLTSPTNCSHGGLSP) is disordered. The span at 1034-1046 (KNSSNSSMGSPSN) shows a compositional bias: low complexity. The segment covering 1058 to 1070 (SRASPLTSPTNCS) has biased composition (polar residues). HEAT repeat units lie at residues 1256–1293 (EHFK…NQPA) and 1374–1411 (QILP…VIGE).

Belongs to the CLASP family. Interacts (via C-terminus) with clip1/clip-170, and cenpe.

It is found in the cytoplasm. The protein localises to the cytoskeleton. It localises to the microtubule organizing center. The protein resides in the centrosome. Its subcellular location is the chromosome. It is found in the centromere. The protein localises to the kinetochore. It localises to the spindle. The protein resides in the golgi apparatus. Its subcellular location is the trans-Golgi network. In terms of biological role, microtubule plus-end tracking protein that promotes the stabilization of dynamic microtubules during anaphase. Plays a crucial role in chromatin-induced microtubule formation. May also act at microtubule minus ends. May be involved in the nucleation of noncentrosomal microtubules originating from the trans-Golgi network (TGN). The polypeptide is CLIP-associating protein 1 (Xenopus tropicalis (Western clawed frog)).